The primary structure comprises 197 residues: Ion-translocating oxidoreductase complex subunit B (197 aa).

Residues M1 to S26 form a hydrophobic region. Residues E32–V90 form the 4Fe-4S domain. Residues C49, C52, C57, C73, C115, C118, C121, C125, C145, C148, C151, and C155 each contribute to the [4Fe-4S] cluster site. 4Fe-4S ferredoxin-type domains follow at residues Q106–K135 and Q136–A165.

This sequence belongs to the 4Fe4S bacterial-type ferredoxin family. RnfB subfamily. The complex is composed of six subunits: RnfA, RnfB, RnfC, RnfD, RnfE and RnfG. [4Fe-4S] cluster serves as cofactor.

Its subcellular location is the cell inner membrane. Functionally, part of a membrane-bound complex that couples electron transfer with translocation of ions across the membrane. The chain is Ion-translocating oxidoreductase complex subunit B from Hahella chejuensis (strain KCTC 2396).